The chain runs to 104 residues: MSLRLYDSYGQDAVISDLVSWGGLMGPFHDYFERGNLDIFSGLGSCLSGPVCAMNLTSDGSGDHHGWYCNYVEVTMSESRRRSCSQEKFEVEQWLARDASPYEL.

In terms of domain architecture, PLAT spans 1-104 (MSLRLYDSYG…LARDASPYEL (104 aa)).

In Arabidopsis thaliana (Mouse-ear cress), this protein is PLAT domain-containing protein 3.